The chain runs to 349 residues: Methylglutaconyl-CoA hydratase 1, mitochondrial (349 aa).

The N-terminal 37 residues, 1–37 (MPPVSRILSYAPRVAIRPSSQLARPARAFAVGTVRYY), are a transit peptide targeting the mitochondrion.

Belongs to the enoyl-CoA hydratase/isomerase family. Homohexamer.

The protein localises to the mitochondrion. It carries out the reaction (3S)-3-hydroxy-3-methylglutaryl-CoA = 3-methyl-(2E)-glutaconyl-CoA + H2O. Its pathway is amino-acid degradation; L-leucine degradation; (S)-3-hydroxy-3-methylglutaryl-CoA from 3-isovaleryl-CoA: step 3/3. Its function is as follows. 3-methylglutaconyl-CoA hydratase that catalyzes the fifth step in the leucine degradation pathway, the reversible hydration of 3-methylglutaconyl-CoA (3-MG-CoA) to 3-hydroxy-3-methylglutaryl-CoA (HMG-CoA). Involved in vegetative growth, conidiation and in the stress response. Controls mitochondrial morphology and mitophagy, which are critical for the infectious growth of the pathogen. The protein is Methylglutaconyl-CoA hydratase 1, mitochondrial of Pyricularia oryzae (strain 70-15 / ATCC MYA-4617 / FGSC 8958) (Rice blast fungus).